The chain runs to 257 residues: Dof zinc finger protein DOF5.3 (257 aa).

The segment at 23-50 (LSYSSNPTPLDNDQKKPSPATAVTRPQP) is disordered. Residues 24-33 (SYSSNPTPLD) show a composition bias toward polar residues. The segment at 55 to 109 (LRCPRCDSTNTKFCYYNNYSLTQPRYFCKSCRRYWTKGGTLRNIPVGGGCRKNKR) adopts a Dof-type zinc-finger fold. Residues Cys57, Cys60, Cys82, and Cys85 each contribute to the Zn(2+) site. Positions 104-127 (CRKNKRSTSSAARSLRTTPEPASH) are disordered. Over residues 110–121 (STSSAARSLRTT) the composition is skewed to low complexity.

As to expression, the PEAR proteins (e.g. DOF2.4, DOF5.1, DOF3.2, DOF1.1, DOF5.6 and DOF5.3) form a short-range concentration gradient that peaks at protophloem sieve elements (PSE). Accumulates in the stele.

The protein resides in the nucleus. In terms of biological role, transcription factor that binds specifically to a 5'-AA[AG]G-3' consensus core sequence. The PEAR proteins (e.g. DOF2.4, DOF5.1, DOF3.2, DOF1.1, DOF5.6 and DOF5.3) activate gene expression that promotes radial growth of protophloem sieve elements. This is Dof zinc finger protein DOF5.3 from Arabidopsis thaliana (Mouse-ear cress).